We begin with the raw amino-acid sequence, 327 residues long: tRNA-dihydrouridine(20/20a) synthase (327 aa).

FMN contacts are provided by residues 11–13 and Q63; that span reads PML. C93 serves as the catalytic Proton donor. Residues K132, H165, 205-207, and 227-228 each bind FMN; these read NGG and GR.

The protein belongs to the Dus family. DusA subfamily. The cofactor is FMN.

The enzyme catalyses 5,6-dihydrouridine(20) in tRNA + NADP(+) = uridine(20) in tRNA + NADPH + H(+). It catalyses the reaction 5,6-dihydrouridine(20) in tRNA + NAD(+) = uridine(20) in tRNA + NADH + H(+). It carries out the reaction 5,6-dihydrouridine(20a) in tRNA + NADP(+) = uridine(20a) in tRNA + NADPH + H(+). The catalysed reaction is 5,6-dihydrouridine(20a) in tRNA + NAD(+) = uridine(20a) in tRNA + NADH + H(+). Its function is as follows. Catalyzes the synthesis of 5,6-dihydrouridine (D), a modified base found in the D-loop of most tRNAs, via the reduction of the C5-C6 double bond in target uridines. Specifically modifies U20 and U20a in tRNAs. The polypeptide is tRNA-dihydrouridine(20/20a) synthase (Vibrio cholerae serotype O1 (strain ATCC 39315 / El Tor Inaba N16961)).